Here is a 353-residue protein sequence, read N- to C-terminus: Mitochondrial import inner membrane translocase subunit TIM50 (353 aa).

The N-terminal 44 residues, 1–44 (MAASAAVFSRLRSGLRLGSRGLCTRLATPPRRAPDQAAEIGSRG), are a transit peptide targeting the mitochondrion. Residues 25–60 (RLATPPRRAPDQAAEIGSRGSTKAQGPQQQPGSEGP) are disordered. Ser-45 is subject to Phosphoserine. At 45 to 65 (STKAQGPQQQPGSEGPSYAKK) the chain is on the mitochondrial matrix side. Residues 49–60 (QGPQQQPGSEGP) are compositionally biased toward low complexity. A helical transmembrane segment spans residues 66-86 (VALWLAGLLGAGGTVSVVYIF). Over 87–353 (GNNPVDENGA…SRLWPRSKQP (267 aa)) the chain is Mitochondrial intermembrane. An FCP1 homology domain is found at 143 to 286 (YYQPPYTLVL…LDLSAFLKTI (144 aa)). Ser-341 is modified (phosphoserine).

It belongs to the TIM50 family. In terms of assembly, component of the TIM23 complex at least composed of TIMM23, TIMM17 (TIMM17A or TIMM17B) and TIMM50; within this complex, directly interacts with TIMM23. The complex interacts with the TIMM44 component of the PAM complex and with DNAJC15. As to quaternary structure, interacts with COIL and snRNPs. Widely expressed. Expressed at higher level in brain, kidney and liver (at protein level).

The protein localises to the mitochondrion inner membrane. It is found in the nucleus speckle. Its function is as follows. Essential component of the TIM23 complex, a complex that mediates the translocation of transit peptide-containing proteins across the mitochondrial inner membrane. Has some phosphatase activity in vitro; however such activity may not be relevant in vivo. May participate in the release of snRNPs and SMN from the Cajal body. In Homo sapiens (Human), this protein is Mitochondrial import inner membrane translocase subunit TIM50 (TIMM50).